The following is a 279-amino-acid chain: Tryptophan 2,3-dioxygenase (279 aa).

Substrate is bound by residues 48–52 (FIVIH), Tyr110, and Arg114. His237 contacts heme. Thr251 is a binding site for substrate.

Belongs to the tryptophan 2,3-dioxygenase family. As to quaternary structure, homotetramer. Requires heme as cofactor.

The enzyme catalyses L-tryptophan + O2 = N-formyl-L-kynurenine. It functions in the pathway amino-acid degradation; L-tryptophan degradation via kynurenine pathway; L-kynurenine from L-tryptophan: step 1/2. Functionally, heme-dependent dioxygenase that catalyzes the oxidative cleavage of the L-tryptophan (L-Trp) pyrrole ring and converts L-tryptophan to N-formyl-L-kynurenine. Catalyzes the oxidative cleavage of the indole moiety. The chain is Tryptophan 2,3-dioxygenase from Bacillus anthracis.